The chain runs to 240 residues: Proteasome subunit alpha (240 aa).

It belongs to the peptidase T1A family. In terms of assembly, the 20S proteasome core is composed of 14 alpha and 14 beta subunits that assemble into four stacked heptameric rings, resulting in a barrel-shaped structure. The two inner rings, each composed of seven catalytic beta subunits, are sandwiched by two outer rings, each composed of seven alpha subunits. The catalytic chamber with the active sites is on the inside of the barrel. Has a gated structure, the ends of the cylinder being occluded by the N-termini of the alpha-subunits. Is capped at one or both ends by the proteasome regulatory ATPase, PAN.

It localises to the cytoplasm. The formation of the proteasomal ATPase PAN-20S proteasome complex, via the docking of the C-termini of PAN into the intersubunit pockets in the alpha-rings, triggers opening of the gate for substrate entry. Interconversion between the open-gate and close-gate conformations leads to a dynamic regulation of the 20S proteasome proteolysis activity. In terms of biological role, component of the proteasome core, a large protease complex with broad specificity involved in protein degradation. In Methanoregula boonei (strain DSM 21154 / JCM 14090 / 6A8), this protein is Proteasome subunit alpha.